The sequence spans 514 residues: Membrane-bound lytic murein transglycosylase F (514 aa).

An N-terminal signal peptide occupies residues 1-30; sequence MKKLKINYLFIGILTLLLAAALWPSIPWFG. The tract at residues 31-269 is non-LT domain; the sequence is KTENHIAAIQ…RIEEKYLGHG (239 aa). The tract at residues 270–514 is LT domain; sequence DDFDYVDTRS…LFTPQKKEEK (245 aa). E314 is a catalytic residue.

It in the N-terminal section; belongs to the bacterial solute-binding protein 3 family. The protein in the C-terminal section; belongs to the transglycosylase Slt family.

The protein localises to the cell outer membrane. The catalysed reaction is Exolytic cleavage of the (1-&gt;4)-beta-glycosidic linkage between N-acetylmuramic acid (MurNAc) and N-acetylglucosamine (GlcNAc) residues in peptidoglycan, from either the reducing or the non-reducing ends of the peptidoglycan chains, with concomitant formation of a 1,6-anhydrobond in the MurNAc residue.. Murein-degrading enzyme that degrades murein glycan strands and insoluble, high-molecular weight murein sacculi, with the concomitant formation of a 1,6-anhydromuramoyl product. Lytic transglycosylases (LTs) play an integral role in the metabolism of the peptidoglycan (PG) sacculus. Their lytic action creates space within the PG sacculus to allow for its expansion as well as for the insertion of various structures such as secretion systems and flagella. In Salmonella typhimurium (strain LT2 / SGSC1412 / ATCC 700720), this protein is Membrane-bound lytic murein transglycosylase F.